The following is a 518-amino-acid chain: MESTLSVSDEKLTNSSTALNNCGDNKESSQVLTTANTTTDNQQVQPKSQHQQSASTEPLSKERTNISLENDLILVDPNQQSKNTVSDSVQDTTGVPSDHGKQQTIGDQIKILISSNPLNIEEYSSHLNRLATILYEENFTSDFLVTLHYKILQLMDELPKFVDLQNPLKSQLYTIIDKNFDILIKLATNYKVMEVSTASIRFLTTVFMNLNYWEVYNLLNKKPVLYHFLNLIEFDLNDCYTRFINDYQRFTYDKITQPTVKSRSRSKVTKKRKVKGDSDFAGSNTATATTSVTTPDANTSHEGKQHRSEAFFSLNPDTSDHDKYVADVISGANVQKRKFRPDVKLEHHRIIKKPQPAADKLSTKSSNYDPDVIHECQLPSAEEPHKLCLRRFSRKYELIRHQETVHSKKKKLFKCFVCVKQNPGVGPRIFTRHDTLAKHIRVNHKISGKEAKAEVAYSKKHAEVVEEGDITVHVGRRKTKVDFELRAHMEKRKSSGDDTNYMETSDLESGEEEVTFNK.

The segment covering 1 to 41 has biased composition (polar residues); it reads MESTLSVSDEKLTNSSTALNNCGDNKESSQVLTTANTTTDN. Disordered stretches follow at residues 1–63, 75–101, and 261–307; these read MEST…SKER, VDPN…DHGK, and KSRS…KQHR. A compositionally biased stretch (low complexity) spans 42–52; that stretch reads QQVQPKSQHQQ. Positions 77–95 are enriched in polar residues; the sequence is PNQQSKNTVSDSVQDTTGV. A compositionally biased stretch (basic residues) spans 262–274; that stretch reads SRSRSKVTKKRKV. Over residues 283 to 298 the composition is skewed to low complexity; it reads SNTATATTSVTTPDAN. The C2H2-type zinc finger occupies 374 to 406; sequence HECQLPSAEEPHKLCLRRFSRKYELIRHQETVH. The segment at 492 to 518 is disordered; that stretch reads RKSSGDDTNYMETSDLESGEEEVTFNK. Residues 505–518 are compositionally biased toward acidic residues; sequence SDLESGEEEVTFNK.

It is found in the nucleus. Its function is as follows. Probable transcription factor involved in the regulation of filamentous growth. This is Filamentous growth regulator 15 (FGR15) from Candida albicans (strain SC5314 / ATCC MYA-2876) (Yeast).